A 660-amino-acid chain; its full sequence is Bifunctional polymyxin resistance protein ArnA (660 aa).

The formyltransferase ArnAFT stretch occupies residues 1–304; the sequence is MKAVVFAYHD…TLGLVAGAII (304 aa). The active-site Proton donor; for formyltransferase activity is the His-104. (6R)-10-formyltetrahydrofolate is bound by residues Arg-114 and 136 to 140; that span reads VSRAD. The tract at residues 314-660 is dehydrogenase ArnADH; the sequence is RRTRVLILGV…KTVELTEPQA (347 aa). NAD(+) contacts are provided by residues Asp-347 and 368-369; that span reads DI. UDP-alpha-D-glucuronate-binding positions include Ala-393, Tyr-398, and 432–433; that span reads TS. The active-site Proton acceptor; for decarboxylase activity is Glu-434. Residues Arg-460, Asn-492, 526-535, and Tyr-613 contribute to the UDP-alpha-D-glucuronate site; that span reads KLIDGGRQKR. The Proton donor; for decarboxylase activity role is filled by Arg-619.

It in the N-terminal section; belongs to the Fmt family. UDP-L-Ara4N formyltransferase subfamily. The protein in the C-terminal section; belongs to the NAD(P)-dependent epimerase/dehydratase family. UDP-glucuronic acid decarboxylase subfamily. Homohexamer, formed by a dimer of trimers.

It carries out the reaction UDP-alpha-D-glucuronate + NAD(+) = UDP-beta-L-threo-pentopyranos-4-ulose + CO2 + NADH. The enzyme catalyses UDP-4-amino-4-deoxy-beta-L-arabinose + (6R)-10-formyltetrahydrofolate = UDP-4-deoxy-4-formamido-beta-L-arabinose + (6S)-5,6,7,8-tetrahydrofolate + H(+). It functions in the pathway nucleotide-sugar biosynthesis; UDP-4-deoxy-4-formamido-beta-L-arabinose biosynthesis; UDP-4-deoxy-4-formamido-beta-L-arabinose from UDP-alpha-D-glucuronate: step 1/3. The protein operates within nucleotide-sugar biosynthesis; UDP-4-deoxy-4-formamido-beta-L-arabinose biosynthesis; UDP-4-deoxy-4-formamido-beta-L-arabinose from UDP-alpha-D-glucuronate: step 3/3. It participates in bacterial outer membrane biogenesis; lipopolysaccharide biosynthesis. Functionally, bifunctional enzyme that catalyzes the oxidative decarboxylation of UDP-glucuronic acid (UDP-GlcUA) to UDP-4-keto-arabinose (UDP-Ara4O) and the addition of a formyl group to UDP-4-amino-4-deoxy-L-arabinose (UDP-L-Ara4N) to form UDP-L-4-formamido-arabinose (UDP-L-Ara4FN). The modified arabinose is attached to lipid A and is required for resistance to polymyxin and cationic antimicrobial peptides. The protein is Bifunctional polymyxin resistance protein ArnA of Enterobacter sp. (strain 638).